Consider the following 181-residue polypeptide: Protein Syd (181 aa).

It belongs to the Syd family.

Its subcellular location is the cell inner membrane. Functionally, interacts with the SecY protein in vivo. May bind preferentially to an uncomplexed state of SecY, thus functioning either as a chelating agent for excess SecY in the cell or as a regulatory factor that negatively controls the translocase function. In Shigella flexneri serotype 5b (strain 8401), this protein is Protein Syd.